The chain runs to 462 residues: ATP synthase subunit beta (462 aa).

Residue 151-158 (GGAGVGKT) coordinates ATP.

The protein belongs to the ATPase alpha/beta chains family. In terms of assembly, F-type ATPases have 2 components, CF(1) - the catalytic core - and CF(0) - the membrane proton channel. CF(1) has five subunits: alpha(3), beta(3), gamma(1), delta(1), epsilon(1). CF(0) has three main subunits: a(1), b(2) and c(9-12). The alpha and beta chains form an alternating ring which encloses part of the gamma chain. CF(1) is attached to CF(0) by a central stalk formed by the gamma and epsilon chains, while a peripheral stalk is formed by the delta and b chains.

It localises to the cell inner membrane. It carries out the reaction ATP + H2O + 4 H(+)(in) = ADP + phosphate + 5 H(+)(out). Functionally, produces ATP from ADP in the presence of a proton gradient across the membrane. The catalytic sites are hosted primarily by the beta subunits. The protein is ATP synthase subunit beta of Chlorobium limicola.